A 503-amino-acid chain; its full sequence is Aromatase 1 (503 aa).

Cysteine 437 lines the heme pocket.

This sequence belongs to the cytochrome P450 family. Requires heme as cofactor.

It localises to the membrane. It catalyses the reaction testosterone + 3 reduced [NADPH--hemoprotein reductase] + 3 O2 = 17beta-estradiol + formate + 3 oxidized [NADPH--hemoprotein reductase] + 4 H2O + 4 H(+). The catalysed reaction is androst-4-ene-3,17-dione + 3 reduced [NADPH--hemoprotein reductase] + 3 O2 = estrone + formate + 3 oxidized [NADPH--hemoprotein reductase] + 4 H2O + 4 H(+). Functionally, catalyzes the formation of aromatic C18 estrogens from C19 androgens. In Sus scrofa (Pig), this protein is Aromatase 1 (CYP19A1).